A 162-amino-acid chain; its full sequence is Interleukin-15 (162 aa).

Positions 1-29 (MRILKPHLRSTSIQCYLCLLLNSHFLTEA) are cleaved as a signal peptide. The propeptide occupies 30-48 (GIHVFILGCISAGLPKTEA). Cystine bridges form between cysteine 83/cysteine 133 and cysteine 90/cysteine 136. N-linked (GlcNAc...) asparagine glycosylation occurs at asparagine 108.

It belongs to the IL-15/IL-21 family.

Its subcellular location is the secreted. In terms of biological role, cytokine that plays a major role in the development of inflammatory and protective immune responses to microbial invaders and parasites by modulating immune cells of both the innate and adaptive immune systems. Stimulates the proliferation of natural killer cells, T-cells and B-cells and promotes the secretion of several cytokines. In monocytes, induces the production of IL8 and monocyte chemotactic protein 1/CCL2, two chemokines that attract neutrophils and monocytes respectively to sites of infection. Unlike most cytokines, which are secreted in soluble form, IL15 is expressed in association with its high affinity IL15RA on the surface of IL15-producing cells and delivers signals to target cells that express IL2RB and IL2RG receptor subunits. Binding to its receptor triggers the phosphorylation of JAK1 and JAK3 and the recruitment and subsequent phosphorylation of signal transducer and activator of transcription-3/STAT3 and STAT5. In mast cells, induces the rapid tyrosine phosphorylation of STAT6 and thereby controls mast cell survival and release of cytokines such as IL4. The sequence is that of Interleukin-15 (IL15) from Ailuropoda melanoleuca (Giant panda).